The primary structure comprises 601 residues: Glutamine--fructose-6-phosphate aminotransferase [isomerizing] (601 aa).

The active-site Nucleophile; for GATase activity is the C2. Residues 2-216 (CGIVGYIGTN…DKEIVIVTKD (215 aa)) form the Glutamine amidotransferase type-2 domain. SIS domains follow at residues 282-421 (IIDE…EIGD) and 453-591 (IAGE…VDKP). The active-site For Fru-6P isomerization activity is K596.

In terms of assembly, homodimer.

It is found in the cytoplasm. It carries out the reaction D-fructose 6-phosphate + L-glutamine = D-glucosamine 6-phosphate + L-glutamate. Catalyzes the first step in hexosamine metabolism, converting fructose-6P into glucosamine-6P using glutamine as a nitrogen source. The chain is Glutamine--fructose-6-phosphate aminotransferase [isomerizing] from Listeria monocytogenes serovar 1/2a (strain ATCC BAA-679 / EGD-e).